The primary structure comprises 100 residues: NADH-quinone oxidoreductase subunit K (100 aa).

Helical transmembrane passes span leucine 4–isoleucine 24, leucine 28–valine 48, and valine 60–leucine 80.

This sequence belongs to the complex I subunit 4L family. NDH-1 is composed of 13 different subunits. Subunits NuoA, H, J, K, L, M, N constitute the membrane sector of the complex.

The protein resides in the cell inner membrane. The enzyme catalyses a quinone + NADH + 5 H(+)(in) = a quinol + NAD(+) + 4 H(+)(out). Its function is as follows. NDH-1 shuttles electrons from NADH, via FMN and iron-sulfur (Fe-S) centers, to quinones in the respiratory chain. The immediate electron acceptor for the enzyme in this species is believed to be ubiquinone. Couples the redox reaction to proton translocation (for every two electrons transferred, four hydrogen ions are translocated across the cytoplasmic membrane), and thus conserves the redox energy in a proton gradient. The sequence is that of NADH-quinone oxidoreductase subunit K from Shigella sonnei (strain Ss046).